The primary structure comprises 277 residues: Thymidylate synthase (277 aa).

Residue Arg21 participates in dUMP binding. Residue His51 coordinates (6R)-5,10-methylene-5,6,7,8-tetrahydrofolate. Residue 126-127 participates in dUMP binding; the sequence is RR. Residue Cys159 is the Nucleophile of the active site. DUMP-binding positions include 179 to 182, Asn190, and 220 to 222; these read RSAD and HLY. Position 182 (Asp182) interacts with (6R)-5,10-methylene-5,6,7,8-tetrahydrofolate. Residue Ala276 coordinates (6R)-5,10-methylene-5,6,7,8-tetrahydrofolate.

This sequence belongs to the thymidylate synthase family. Bacterial-type ThyA subfamily. As to quaternary structure, homodimer.

The protein localises to the cytoplasm. The catalysed reaction is dUMP + (6R)-5,10-methylene-5,6,7,8-tetrahydrofolate = 7,8-dihydrofolate + dTMP. The protein operates within pyrimidine metabolism; dTTP biosynthesis. Functionally, catalyzes the reductive methylation of 2'-deoxyuridine-5'-monophosphate (dUMP) to 2'-deoxythymidine-5'-monophosphate (dTMP) while utilizing 5,10-methylenetetrahydrofolate (mTHF) as the methyl donor and reductant in the reaction, yielding dihydrofolate (DHF) as a by-product. This enzymatic reaction provides an intracellular de novo source of dTMP, an essential precursor for DNA biosynthesis. The sequence is that of Thymidylate synthase from Thioalkalivibrio sulfidiphilus (strain HL-EbGR7).